Here is an 855-residue protein sequence, read N- to C-terminus: Probable inactive ATP-dependent zinc metalloprotease FTSHI 4, chloroplastic (855 aa).

The transit peptide at Met1–Ser78 directs the protein to the chloroplast. Residues Val242–Ile262 traverse the membrane as a helical segment. ATP is bound at residue Gly356 to Thr363.

Belongs to the AAA ATPase family. Homooligomer. Interacts with FtsHi2. As to expression, ubiquitous but preferentially expressed in young leaves.

Its subcellular location is the plastid. It is found in the chloroplast thylakoid membrane. Functions in chloroplast biogenesis and chloroplast division. Required for plastid development during embryogenesis. Might be involved in chaperone functions or play a structural role in the thylakoid FtsH complex. The chain is Probable inactive ATP-dependent zinc metalloprotease FTSHI 4, chloroplastic from Arabidopsis thaliana (Mouse-ear cress).